Reading from the N-terminus, the 596-residue chain is MLLRLSPSRMALKRKLDSFLRNVHSQSAPPAAMAHARTVRLSAREEQLRALLLDVCRSIDAAGDVTQPIILRWAGGWVRDKLLGIESHDIDVAINAMTGVHFAQRMCDFCTLPDAIKRHGIGPRDVGNLHNVARNPDKSKHLETAMVKIFGLDLDFVNLRRETYADDSRNPAMEFGSAEEDALRRDATINALFFNLHTGCVEDFTGGLPDMAARMIRTPLDPLQTFTDDPLRVLRLVRFASRLQFYIDPATQRVMDHPTVLQALRVKISRERVGVELEKMLKGTCPPQVEVHFWAQPTRRALELLDELHLYHAIFTDPAREPTERPDLRRWHVAYECLGWLLGNRSPGSIGTLLAQSEEAVYVAWNLAAVSPWMPVEEPPGVKKKANALPPVAVIAREGFRAPNKLTDVMAASHRHRKEILQLKEAVCHGEPWTRQRDRCGMAIRRWDSQGGFWTLQVLSTLLVDAMEQVDSWPIVAHPGKPSQPADVPETPLSSGASKSKNLDPSIAKRDDFITGWQKFLDHVVELNVYNAPTMKRLLDGRALAQALGVKPGKWTGKALDVCMAWQLRNPDETDPSKAIEEVRMRRDELGIPLDG.

The N-terminal 22 residues, 1 to 22 (MLLRLSPSRMALKRKLDSFLRN), are a transit peptide targeting the mitochondrion. The segment at 475 to 504 (IVAHPGKPSQPADVPETPLSSGASKSKNLD) is disordered.

The protein belongs to the tRNA nucleotidyltransferase/poly(A) polymerase family.

The protein localises to the mitochondrion. Functionally, nucleotidyltransferase; part of the gene cluster that mediates the biosynthesis of the lipopeptide antibiotics leucinostatins that show extensive biological activities, including antimalarial, antiviral, antibacterial, antifungal, and antitumor activities, as well as phytotoxic. The function of lcsQ within the leucinostatins biosynthesis has not been identified yet. The chain is Nucleotidyltransferase lcsQ from Purpureocillium lilacinum (Paecilomyces lilacinus).